A 284-amino-acid polypeptide reads, in one-letter code: tRNA-cytidine(32) 2-sulfurtransferase (284 aa).

Positions 45–50 match the PP-loop motif motif; sequence SGGKDS. Positions 120, 123, and 211 each coordinate [4Fe-4S] cluster.

The protein belongs to the TtcA family. Homodimer. Requires Mg(2+) as cofactor. It depends on [4Fe-4S] cluster as a cofactor.

Its subcellular location is the cytoplasm. It carries out the reaction cytidine(32) in tRNA + S-sulfanyl-L-cysteinyl-[cysteine desulfurase] + AH2 + ATP = 2-thiocytidine(32) in tRNA + L-cysteinyl-[cysteine desulfurase] + A + AMP + diphosphate + H(+). It functions in the pathway tRNA modification. Functionally, catalyzes the ATP-dependent 2-thiolation of cytidine in position 32 of tRNA, to form 2-thiocytidine (s(2)C32). The sulfur atoms are provided by the cysteine/cysteine desulfurase (IscS) system. This Alcanivorax borkumensis (strain ATCC 700651 / DSM 11573 / NCIMB 13689 / SK2) protein is tRNA-cytidine(32) 2-sulfurtransferase.